The primary structure comprises 146 residues: 3-hydroxyacyl-[acyl-carrier-protein] dehydratase FabZ (146 aa).

The active site involves H51.

The protein belongs to the thioester dehydratase family. FabZ subfamily.

It is found in the cytoplasm. The enzyme catalyses a (3R)-hydroxyacyl-[ACP] = a (2E)-enoyl-[ACP] + H2O. Functionally, involved in unsaturated fatty acids biosynthesis. Catalyzes the dehydration of short chain beta-hydroxyacyl-ACPs and long chain saturated and unsaturated beta-hydroxyacyl-ACPs. In Staphylococcus aureus (strain Mu3 / ATCC 700698), this protein is 3-hydroxyacyl-[acyl-carrier-protein] dehydratase FabZ.